The chain runs to 130 residues: Small ribosomal subunit protein uS9 (130 aa).

This sequence belongs to the universal ribosomal protein uS9 family.

This Burkholderia thailandensis (strain ATCC 700388 / DSM 13276 / CCUG 48851 / CIP 106301 / E264) protein is Small ribosomal subunit protein uS9.